The chain runs to 163 residues: Nucleotide-binding protein MUL_0671 (163 aa).

It belongs to the YajQ family.

Nucleotide-binding protein. This Mycobacterium ulcerans (strain Agy99) protein is Nucleotide-binding protein MUL_0671.